The chain runs to 241 residues: Carboxy-S-adenosyl-L-methionine synthase (241 aa).

S-adenosyl-L-methionine-binding positions include Y38, 63–65 (GCS), 88–89 (DN), 116–117 (DI), N131, and R198.

Belongs to the class I-like SAM-binding methyltransferase superfamily. Cx-SAM synthase family. Homodimer.

The catalysed reaction is prephenate + S-adenosyl-L-methionine = carboxy-S-adenosyl-L-methionine + 3-phenylpyruvate + H2O. Catalyzes the conversion of S-adenosyl-L-methionine (SAM) to carboxy-S-adenosyl-L-methionine (Cx-SAM). The polypeptide is Carboxy-S-adenosyl-L-methionine synthase (Haemophilus influenzae (strain ATCC 51907 / DSM 11121 / KW20 / Rd)).